Reading from the N-terminus, the 488-residue chain is Peptidoglycan endopeptidase LytF (488 aa).

An N-terminal signal peptide occupies residues 1–26 (MKKKLAAGLTASAIVGTTLVVTPAEA). LysM domains are found at residues 27 to 70 (ATIK…TLTI) and 92 to 135 (SVYT…KLKV). Disordered stretches follow at residues 70 to 93 (IPGS…GSSV), 137 to 176 (GTVS…TGTY), and 218 to 239 (KSSG…TSAT). Composition is skewed to low complexity over residues 72-93 (GSKS…GSSV) and 140-172 (SSSS…SSSS). Residues 174–217 (GTYKVQLGDSLWKIANKVNMSIAELKVLNNLKSDTIYVNQVLKT) form the LysM 3 domain. The region spanning 240–283 (TKYTVKSGDSLWKIANNYNLTVQQIRNINNLKSDVLYVGQVLKL) is the LysM 4 domain. Residues 286-306 (KASSGSSSSSSSSSNASSGTT) form a disordered region. The LysM 5 domain maps to 307 to 350 (TTYTVKSGDSLWVIAQKFNVTAQQIREKNNLKTDVLQVGQKLVI). The region spanning 370 to 488 (SAKINTMISA…QRYLGAKRYF (119 aa)) is the NlpC/P60 domain. Cys400 acts as the Nucleophile in catalysis. His449 functions as the Proton acceptor in the catalytic mechanism. Asn461 is an active-site residue.

Belongs to the peptidase C40 family.

The protein resides in the secreted. It localises to the cell wall. Its activity is regulated as follows. Is inhibited in vitro by para-hydroxymercuribenzoate, a sulfydryl inhibitor. Functionally, cell wall hydrolase that cleaves gamma-D-glutamate-meso-diaminopimelate bonds in peptidoglycan. LytF is necessary and sufficient for vegetative daughter cell separation, and also seems to play a role in cell autolysis. The sequence is that of Peptidoglycan endopeptidase LytF (lytF) from Bacillus subtilis (strain 168).